The following is a 405-amino-acid chain: Prenyltransferase phqA (405 aa).

Tyr195, Lys262, and Gln332 together coordinate dimethylallyl diphosphate.

Belongs to the tryptophan dimethylallyltransferase family.

The protein operates within alkaloid biosynthesis. In terms of biological role, prenyltransferase; part of the gene cluster that mediates the biosynthesis of paraherquamide, a fungal indole alkaloid that belongs to a family of natural products containing a characteristic bicyclo[2.2.2]diazaoctane core. The first steps in the biosynthesis of paraherquamide is the production of the beta-methyl-proline precursor from L-isoleucine. They require oxidation of a terminally hydroxylated L-isoleucine to the corresponding aldehyde by enzymes which have still to be identified. Spontaneous cyclization and dehydration would yield the 4-methyl pyrolline-5-carboxylic acid, which is then reduced by the pyrroline-5-carboxylate reductase phqD leading to the beta-methyl-proline precursor. The next step of paraherquamide biosynthesis involves coupling of beta-methyl-proline and L-tryptophan by the bimodular NRPS phqB, to produce a monooxopiperazine intermediate. The reductase (R) domain of phqB utilizes NADPH for hydride transfer to reduce the thioester bond of the T domain-tethered linear dipeptide to a hemithioaminal intermediate, which spontaneously cleaves the C-S bond to release the aldehyde product. This compound undergoes spontaneous cyclization and dehydration to give a dienamine which is reverse prenylated at C-2 by the reverse prenyltransferase phqJ. The other prenyltransferase present in the cluster, phqI may be a redundant gene in the pathway. During biosynthetic assembly, the key step to produce the polycyclic core is catalyzed by the bifunctional reductase and intramolecular [4+2] Diels-Alderase, phqE, resulting in formation of the [2.2.2] diazaoctane intermediate preparaherquamide. Following formation of preparaherquamide, an indole 2,3-epoxidation-initiated pinacol-like rearrangement is catalyzed by the phqK FAD-dependent monooxygenase. The prenyltransferase phqA, the cytochrome P450 monooxygenase phqL, and the FAD-linked oxidoreductase phqH (or the cytochrome P450 monooxygenase phqM), are proposed to be involved in the formation of the pyran ring. The FAD-dependent monooxygenase phqK is likely responsible for generation of the spiro-oxindole, and the N-methylation is likely mediated by the phqN methyltransferase leading to the isolable natural product paraherquamide F. However, the order of these biosynthetic steps has still to be determined. In late-stage paraherquamide biosynthesis, the third P450 monooxygenase, phqO, is probably responsible for the C-14 hydroxylation, transforming paraherquamide F to paraherquamide G, and paraherquamide E to the final product paraherquamide A. The expansion from the 6-membered ring pyran (in paraherquamides F and G) to the 7-membered dioxepin ring (in paraherquamides A and E) represents a poorly understood but intriguing process that probably involves the 2-oxoglutarate-dependent dioxygenase phqC. Finally, the remaining members of the paraherquamide cluster, including phqI as well as phqM (or phqH), do not have a clearly prescribed role and appear to be redundant. The polypeptide is Prenyltransferase phqA (Penicillium fellutanum).